Here is a 432-residue protein sequence, read N- to C-terminus: Amino-acid acetyltransferase (432 aa).

One can recognise an N-acetyltransferase domain in the interval 286 to 425; sequence EKLREATIED…ASLYNYQRQS (140 aa).

Belongs to the acetyltransferase family. ArgA subfamily.

The protein localises to the cytoplasm. It carries out the reaction L-glutamate + acetyl-CoA = N-acetyl-L-glutamate + CoA + H(+). Its pathway is amino-acid biosynthesis; L-arginine biosynthesis; N(2)-acetyl-L-ornithine from L-glutamate: step 1/4. The protein is Amino-acid acetyltransferase of Azotobacter vinelandii (strain DJ / ATCC BAA-1303).